The primary structure comprises 132 residues: MVMTDPIADYLTRIRNANMVRHESLEVPASRIKKDISEILKREGFIRDYEVIEDDKQGIIRVFLKYGKNNERVISGLKRISKPGLRNYVKANEVPKVLNGLGIAIISTSNGVVTDKEAREKAAGGEVLAYVW.

This sequence belongs to the universal ribosomal protein uS8 family. In terms of assembly, part of the 30S ribosomal subunit. Contacts proteins S5 and S12.

Functionally, one of the primary rRNA binding proteins, it binds directly to 16S rRNA central domain where it helps coordinate assembly of the platform of the 30S subunit. The polypeptide is Small ribosomal subunit protein uS8 (Latilactobacillus sakei subsp. sakei (strain 23K) (Lactobacillus sakei subsp. sakei)).